The primary structure comprises 398 residues: S-adenosylmethionine synthase (398 aa).

His-16 lines the ATP pocket. Asp-18 is a Mg(2+) binding site. Glu-51 contributes to the K(+) binding site. 2 residues coordinate L-methionine: Glu-64 and Gln-108. Positions 108-118 (QSADIAQGVDA) are flexible loop. Residues 176–178 (DSK), 242–243 (KF), Asp-251, 257–258 (RK), Ala-274, and Lys-278 contribute to the ATP site. Position 251 (Asp-251) interacts with L-methionine. An L-methionine-binding site is contributed by Lys-282.

It belongs to the AdoMet synthase family. In terms of assembly, homotetramer; dimer of dimers. Requires Mg(2+) as cofactor. It depends on K(+) as a cofactor.

It is found in the cytoplasm. The enzyme catalyses L-methionine + ATP + H2O = S-adenosyl-L-methionine + phosphate + diphosphate. It participates in amino-acid biosynthesis; S-adenosyl-L-methionine biosynthesis; S-adenosyl-L-methionine from L-methionine: step 1/1. Its function is as follows. Catalyzes the formation of S-adenosylmethionine (AdoMet) from methionine and ATP. The overall synthetic reaction is composed of two sequential steps, AdoMet formation and the subsequent tripolyphosphate hydrolysis which occurs prior to release of AdoMet from the enzyme. The protein is S-adenosylmethionine synthase of Nitrobacter hamburgensis (strain DSM 10229 / NCIMB 13809 / X14).